The primary structure comprises 99 residues: NADH dehydrogenase [ubiquinone] 1 alpha subcomplex subunit 2 (99 aa).

A2 bears the N-acetylalanine mark. The cysteines at positions 24 and 58 are disulfide-linked. K64 is subject to N6-acetyllysine; alternate. K64 bears the N6-succinyllysine; alternate mark. An N6-acetyllysine modification is found at K75.

It belongs to the complex I NDUFA2 subunit family. Complex I is composed of 45 different subunits.

It is found in the mitochondrion inner membrane. In terms of biological role, accessory subunit of the mitochondrial membrane respiratory chain NADH dehydrogenase (Complex I), that is believed not to be involved in catalysis. Complex I functions in the transfer of electrons from NADH to the respiratory chain. The immediate electron acceptor for the enzyme is believed to be ubiquinone. The protein is NADH dehydrogenase [ubiquinone] 1 alpha subcomplex subunit 2 (NDUFA2) of Macaca fascicularis (Crab-eating macaque).